A 982-amino-acid chain; its full sequence is Protein cramped (982 aa).

5 disordered regions span residues 1–37, 71–111, 323–349, 407–456, and 822–851; these read MEEL…GGGA, QKMK…GSGK, SLPS…ASLD, NKRL…SSGD, and GTSS…QEPG. Pro residues predominate over residues 7 to 20; sequence QPPPPPLTQPPPPS. Residues 21-30 show a composition bias toward low complexity; the sequence is SSVSIEEPLP. Positions 86 to 98 are enriched in basic and acidic residues; it reads SEREPNKKEEKAA. Polar residues predominate over residues 100–111; it reads KTPSQLKTGSGK. The 65-residue stretch at 109-173 folds into the SANT domain; that stretch reads SGKTTWTNVE…HYYQTHHKIC (65 aa). Basic and acidic residues predominate over residues 410 to 425; the sequence is LRTESGSEKRSPETKK. 2 positions are modified to phosphoserine: Ser431 and Ser437. The segment covering 822–833 has biased composition (low complexity); it reads GTSSAGISTSGS.

It belongs to the cramped family. In terms of tissue distribution, ubiquitously expressed throughout embryonic development. High expression is detected in CNS and gonads.

The protein resides in the nucleus. Its function is as follows. Polycomb group (Pc-G) genes are needed to maintain expression patterns of the homeotic selector genes of the Antennapedia (Antp-C) and Bithorax (Bx-C) complexes, and hence for the maintenance of segmental determination. Can act as a modifier of position effect variegation (PEV). The polypeptide is Protein cramped (crm) (Drosophila melanogaster (Fruit fly)).